Reading from the N-terminus, the 291-residue chain is Pituitary-specific positive transcription factor 1 (291 aa).

The short motif at 5 to 13 (PFTSTDTFI) is the 9aaTAD element. The POU-specific domain occupies 124–198 (MDSPEIRELE…ILFKWLEEAE (75 aa)). A DNA-binding region (homeobox) is located at residues 214–273 (KRKRRTTISIAAKDALERHFGEQNKPSSQEILRMAEELNLEKEVVRVWFCNRRQREKRVK).

The protein belongs to the POU transcription factor family. Class-1 subfamily. As to quaternary structure, interacts with PITX1. Interacts with LHX3. Interacts with ELK1.

Its subcellular location is the nucleus. Functionally, transcription factor involved in the specification of the lactotrope, somatotrope, and thyrotrope phenotypes in the developing anterior pituitary. Activates growth hormone and prolactin genes. Specifically binds to the consensus sequence 5'-TAAAT-3'. This chain is Pituitary-specific positive transcription factor 1 (POU1F1), found in Ovis aries (Sheep).